Reading from the N-terminus, the 269-residue chain is Signal recognition particle receptor subunit beta (269 aa).

Residues leucine 35–isoleucine 55 traverse the membrane as a helical segment. Residues glycine 69 to leucine 77 and threonine 90 to serine 93 contribute to the GTP site. Serine 110 is subject to Phosphoserine. GTP-binding positions include glycine 118 and asparagine 178–aspartate 181. Phosphothreonine is present on threonine 212. GTP is bound at residue alanine 246.

It belongs to the SRP receptor beta subunit family. In terms of assembly, heterodimer with SRPRA.

It localises to the endoplasmic reticulum membrane. In terms of biological role, component of the SRP (signal recognition particle) receptor. Ensures, in conjunction with the signal recognition particle, the correct targeting of the nascent secretory proteins to the endoplasmic reticulum membrane system. May mediate the membrane association of SR. In Mus musculus (Mouse), this protein is Signal recognition particle receptor subunit beta (Srprb).